Here is a 579-residue protein sequence, read N- to C-terminus: DELLA protein GAIP (579 aa).

The tract at residues Met1–Ser25 is disordered. A DELLA motif motif is present at residues Asp46–Ala50. Residues Val202–Lys570 enclose the GRAS domain. The segment at Ile209–Ile263 is leucine repeat I (LRI). A VHIID region spans residues Gln281 to Gly346. The VHIID signature appears at Val312 to Asp316. A leucine repeat II (LRII) region spans residues Asp360 to Ser392. The interval Val404 to Asn491 is PFYRE. The short motif at Leu412–Leu416 is the LXXLL motif element. The segment at Ala494 to Lys570 is SAW.

Belongs to the GRAS family. DELLA subfamily. Post-translationally, phosphorylated. Ubiquitinated. Upon GA application it is ubiquitinated, leading to its subsequent degradation.

The protein resides in the nucleus. Its function is as follows. Probable transcriptional regulator that acts as a repressor of the gibberellin (GA) signaling pathway. Probably acts by participating in large multiprotein complexes that represses transcription of GA-inducible genes. Upon GA application, it is degraded by the proteasome, allowing the GA signaling pathway. This chain is DELLA protein GAIP (GAIP), found in Cucurbita maxima (Pumpkin).